We begin with the raw amino-acid sequence, 276 residues long: Ribosomal RNA large subunit methyltransferase E (276 aa).

Residues Gly-52, Phe-54, Asp-72, Asp-90, and Asp-114 each contribute to the S-adenosyl-L-methionine site. The Proton acceptor role is filled by Lys-154. The segment covering 203–249 (RAAPTANATPTPTSTSTSTPTSTSTPTSTSTSTPAPTLTQTQTQTPK) has biased composition (low complexity). Residues 203–276 (RAAPTANATP…AKTGASRRTR (74 aa)) form a disordered region. Positions 265 to 276 (AKAKTGASRRTR) are enriched in basic residues.

It belongs to the class I-like SAM-binding methyltransferase superfamily. RNA methyltransferase RlmE family.

Its subcellular location is the cytoplasm. It carries out the reaction uridine(2552) in 23S rRNA + S-adenosyl-L-methionine = 2'-O-methyluridine(2552) in 23S rRNA + S-adenosyl-L-homocysteine + H(+). Its function is as follows. Specifically methylates the uridine in position 2552 of 23S rRNA at the 2'-O position of the ribose in the fully assembled 50S ribosomal subunit. This is Ribosomal RNA large subunit methyltransferase E from Anaeromyxobacter sp. (strain Fw109-5).